The chain runs to 264 residues: S-adenosylmethionine decarboxylase proenzyme (264 aa).

The active-site Schiff-base intermediate with substrate; via pyruvic acid is the Ser112. Ser112 carries the pyruvic acid (Ser); by autocatalysis modification. The active-site Proton acceptor; for processing activity is His117. Cys140 functions as the Proton donor; for catalytic activity in the catalytic mechanism.

It belongs to the prokaryotic AdoMetDC family. Type 2 subfamily. Heterooctamer of four alpha and four beta chains arranged as a tetramer of alpha/beta heterodimers. Pyruvate is required as a cofactor. Post-translationally, is synthesized initially as an inactive proenzyme. Formation of the active enzyme involves a self-maturation process in which the active site pyruvoyl group is generated from an internal serine residue via an autocatalytic post-translational modification. Two non-identical subunits are generated from the proenzyme in this reaction, and the pyruvate is formed at the N-terminus of the alpha chain, which is derived from the carboxyl end of the proenzyme. The post-translation cleavage follows an unusual pathway, termed non-hydrolytic serinolysis, in which the side chain hydroxyl group of the serine supplies its oxygen atom to form the C-terminus of the beta chain, while the remainder of the serine residue undergoes an oxidative deamination to produce ammonia and the pyruvoyl group blocking the N-terminus of the alpha chain.

It catalyses the reaction S-adenosyl-L-methionine + H(+) = S-adenosyl 3-(methylsulfanyl)propylamine + CO2. It functions in the pathway amine and polyamine biosynthesis; S-adenosylmethioninamine biosynthesis; S-adenosylmethioninamine from S-adenosyl-L-methionine: step 1/1. Functionally, catalyzes the decarboxylation of S-adenosylmethionine to S-adenosylmethioninamine (dcAdoMet), the propylamine donor required for the synthesis of the polyamines spermine and spermidine from the diamine putrescine. The polypeptide is S-adenosylmethionine decarboxylase proenzyme (Pectobacterium atrosepticum (strain SCRI 1043 / ATCC BAA-672) (Erwinia carotovora subsp. atroseptica)).